The sequence spans 298 residues: Leucine-rich repeat-containing protein 55 (298 aa).

Positions 1 to 34 are cleaved as a signal peptide; sequence MGDTWAQLPWPGPPHSALLLVFFLLAAGVMHSDA. The 31-residue stretch at 35 to 65 folds into the LRRNT domain; it reads GTSCPVLCTCRNQVVDCSNQRLFSVPPDLPM. Disulfide bonds link Cys38/Cys44 and Cys42/Cys51. LRR repeat units follow at residues 66 to 87, 90 to 111, 114 to 135, 138 to 160, and 163 to 186; these read DTRNLSLAHNRIAAVPPGYLTC, ELRVLDLRNNSLMELPPGLFLH, RLAHLDLSYNNLSHVPADMFRE, GLVHIDLSHNPWLRRVHPQAFQG, and HLRDLDLSYGGLAFLSLEALEGLP. One can recognise an LRRCT domain in the interval 196 to 251; it reads NPWVCGCTMEPLLKWLRNRIQRCTADSQLAECRGPPEVEGAPLFSLTEESFKACHL. Cystine bridges form between Cys200–Cys227 and Cys202–Cys249. The chain crosses the membrane as a helical span at residues 259 to 279; sequence LFIAFVGFVVSIASVATNFLL.

Interacts with KCNMA1.

The protein resides in the cell membrane. Its function is as follows. Auxiliary protein of the large-conductance, voltage and calcium-activated potassium channel (BK alpha). Modulates gating properties by producing a marked shift in the BK channel's voltage dependence of activation in the hyperpolarizing direction, and in the absence of calcium. In Mus musculus (Mouse), this protein is Leucine-rich repeat-containing protein 55 (Lrrc55).